We begin with the raw amino-acid sequence, 210 residues long: MATFKSLTEADLLSFSTGLIAGVDEVGRGPLVGDVVTAAVILDPNKPISGLNDSKKLSEKRREALFDEICDKALCYQVGRASPAEIDELNILHATMLAMQRAVAGLNIAPELVLVDGNRSPIFVAHNGAGLTSHSIIKGDGLIASISAASIIAKVTRDREMDVLDAAYPQYGFAKHRGYPTKAHFEAIAEHGVFDQYRKSFKPVKALLGL.

In terms of domain architecture, RNase H type-2 spans 18–210; sequence GLIAGVDEVG…FKPVKALLGL (193 aa). Residues D24, E25, and D116 each contribute to the a divalent metal cation site.

Belongs to the RNase HII family. Requires Mn(2+) as cofactor. It depends on Mg(2+) as a cofactor.

It is found in the cytoplasm. It carries out the reaction Endonucleolytic cleavage to 5'-phosphomonoester.. Functionally, endonuclease that specifically degrades the RNA of RNA-DNA hybrids. The sequence is that of Ribonuclease HII from Shewanella baltica (strain OS223).